Here is a 215-residue protein sequence, read N- to C-terminus: Large ribosomal subunit protein eL14 (215 aa).

Lys79 is subject to N6-acetyllysine. The residue at position 85 (Lys85) is an N6-acetyllysine; alternate. Lys85 is subject to N6-succinyllysine; alternate. Lys124 is covalently cross-linked (Glycyl lysine isopeptide (Lys-Gly) (interchain with G-Cter in SUMO2)). Ser139 is subject to Phosphoserine. Residues 161–215 are disordered; it reads VPAKKITAASKKAPAQKVPAQKATGQKAAPAPKAQKGQKAPAQKAPAPKASGKKA. 6 tandem repeats follow at residues 171-175, 176-180, 181-185, 186-190, 193-195, and 196-198. Residues 171 to 190 are 4 X 5 AA tandem repeats of Q-K-A-[PAS]-X; sequence KKAPAQKVPAQKATGQKAAP. A 2 X 3 AA tandem repeats of K-[GA]-Q region spans residues 193–198; that stretch reads KAQKGQ. Residue Lys204 is modified to N6-succinyllysine.

The protein belongs to the eukaryotic ribosomal protein eL14 family. As to quaternary structure, component of the large ribosomal subunit.

The protein resides in the cytoplasm. In terms of biological role, component of the large ribosomal subunit. The ribosome is a large ribonucleoprotein complex responsible for the synthesis of proteins in the cell. The protein is Large ribosomal subunit protein eL14 (RPL14) of Homo sapiens (Human).